The chain runs to 450 residues: Cytidylate cyclase (450 aa).

The Guanylate cyclase domain maps to 97-236 (VTMFVDIRKS…LPVDMTAKLQ (140 aa)). Phe-100 contributes to the a ribonucleoside 5'-triphosphate binding site. Asp-102, Ile-103, and Asp-146 together coordinate Mn(2+). The interval 318–450 (PNQFNFECFV…YRNIIGVYIK (133 aa)) is AGS-C domain.

It belongs to the adenylyl cyclase class-4/guanylyl cyclase family. Pyrimidine cyclase subfamily. In terms of assembly, homodimer. Mn(2+) serves as cofactor.

Its subcellular location is the cytoplasm. It catalyses the reaction CTP = 3',5'-cyclic CMP + diphosphate. With respect to regulation, in E.coli strain MG1655 transformed with both genes cCMP appears between 15 and 30 minutes after infection with phage T5 (at protein level). No cCMP accumulates in uninfected cells. In terms of biological role, pycsar (pyrimidine cyclase system for antiphage resistance) provides immunity against bacteriophage. The pyrimidine cyclase (PycC) synthesizes cyclic nucleotides in response to infection; these serve as specific second messenger signals. The signal activates the adjacent effector, leading to bacterial cell death and abortive phage infection. A clade E Pycsar system. Functionally, the pyrimidine cyclase gene of a two-gene Pycsar system, generates cyclic CMP (cCMP) from CTP in response to bacteriophage infection. Has little to no activity on ATP, GTP or UTP. Expression of this and adjacent effector EcPycTM (AC P0DV25) confers resistance to bacteriophage P1 and T5; expression of this gene alone does not confer resistance. When cells expressing the Pycsar system are infected by phage T5 at low multiplicity of infection (0.2 MOI) the culture survives, at 2.0 MOI bacteria enter growth arrest. The same cells enter growth arrest after exposure to 250 uM cCMP but not cUMP; thus the effector protein responds only to the cNMP produced by its cognate NTP cyclase. Some of the cells treated with cCMP have abnormal membrane protrusions. This is Cytidylate cyclase from Escherichia coli.